Here is an 84-residue protein sequence, read N- to C-terminus: Small nuclear ribonucleoprotein E (84 aa).

A Sm domain is found at 13-84 (INFIFKLLQQ…GDNITLIQAI (72 aa)).

The protein belongs to the snRNP Sm proteins family. As to quaternary structure, component of the Sm core complex, present in spliceosomal snRNP U1, U2, U4/U6 and U5. The core complex contains smb1, smd1, smd2, smd3, sme1, smf1 and smg1 (Sm proteins B, D1, D2, D3, E, F and G, respectively), and is probably a heptameric ring structure.

It localises to the cytoplasm. The protein resides in the nucleus. Involved in pre-mRNA splicing. Binds and is required for the stability of snRNA U1, U2, U4 and U5 which contain a highly conserved structural motif called the Sm binding site. Involved in cap modification. The sequence is that of Small nuclear ribonucleoprotein E from Schizosaccharomyces pombe (strain 972 / ATCC 24843) (Fission yeast).